A 768-amino-acid chain; its full sequence is Levansucrase (768 aa).

The signal sequence occupies residues 1-36 (MLENKKHKKMSLSGKSLLMGTLSTAAIVLSASTVNA). Composition is skewed to polar residues over residues 57 to 68 (SASVNKNDNSGL), 80 to 99 (TETN…SQVN), 106 to 134 (SSTQ…QDSD), and 143 to 153 (NNSQGQSSTSS). The disordered stretch occupies residues 57 to 158 (SASVNKNDNS…SSTSSEKTEL (102 aa)). Sucrose-binding residues include tryptophan 250, aspartate 251, and serine 320. The active-site Nucleophile is aspartate 251. Aspartate 398 contacts Ca(2+). Sucrose contacts are provided by arginine 403 and aspartate 404. Glutamine 429, asparagine 468, and aspartate 502 together coordinate Ca(2+). Glutamate 503 contacts sucrose. Glutamate 505 acts as the Proton donor/acceptor in catalysis. Position 523 (arginine 523) interacts with sucrose. The segment at 688-736 (HQPVTPNVPTTPEKPENPTTPNTPDTPRTPEVPTTPVKKTTQSELPKAG) is disordered. Positions 691–727 (VTPNVPTTPEKPENPTTPNTPDTPRTPEVPTTPVKKT) are enriched in low complexity. Residues 732-736 (LPKAG) carry the LPXTG sorting signal motif. Alanine 735 carries the pentaglycyl murein peptidoglycan amidated alanine modification. Residues 736-768 (GAKDGIAATILGAISSMLGVIGLAGISKRKRNN) constitute a propeptide, removed by sortase.

This sequence belongs to the glycosyl hydrolase 68 family.

The protein localises to the secreted. It is found in the cell wall. It localises to the cell surface. It catalyses the reaction [6)-beta-D-fructofuranosyl-(2-&gt;](n) alpha-D-glucopyranoside + sucrose = [6)-beta-D-fructofuranosyl-(2-&gt;](n+1) alpha-D-glucopyranoside + D-glucose. Its activity is regulated as follows. Calcium ions are required for optimal activity, but do not seem to be essential since addition of EDTA causes only a 48% drop in activity. Ca(2+) may play an important structural role and promote stability of levansucrase. Fructosyltransferase that catalyzes the polymerization of the fructose moiety of sucrose to produce levan polymer and the fructo-oligosaccharide (FOS) 1-kestose. Is also able to convert raffinose into a fructan polymer and a single oligosaccharide (most likely Gal-Glc-Frc-Frc) in vitro; however, L.gasseri strain DSM 20077 is unable to ferment raffinose. Also displays sucrose hydrolase activity. In Lactobacillus gasseri, this protein is Levansucrase.